A 232-amino-acid polypeptide reads, in one-letter code: MALIEKMTKDIQQKGGLIVSCQPVDNSPMDKPDIVAAMAQAAVNAGAVAVRIEGIDNLKATRPLIDVPIIGIVKRDLPDSPVRITPWLNDIEALAAAGADIIAFDGTDRLRPVPVKALLEHVHRLGKLAMADCATFNEGMYCHQLGTEFIGSTMSGYTGGEIPKLPDLQLVTALAEQGCRVIAEGRYNTPMMAARGMQAGAWAVTVGSALTRLEHVCEWFTQALKWQQELDK.

Belongs to the NanE family.

It catalyses the reaction an N-acyl-D-glucosamine 6-phosphate = an N-acyl-D-mannosamine 6-phosphate. It functions in the pathway amino-sugar metabolism; N-acetylneuraminate degradation; D-fructose 6-phosphate from N-acetylneuraminate: step 3/5. In terms of biological role, converts N-acetylmannosamine-6-phosphate (ManNAc-6-P) to N-acetylglucosamine-6-phosphate (GlcNAc-6-P). In Proteus mirabilis (strain HI4320), this protein is Putative N-acetylmannosamine-6-phosphate 2-epimerase.